The primary structure comprises 990 residues: Protein argonaute 7 (990 aa).

Residues 1-13 (MEEKTHHHHHSTN) show a composition bias toward basic residues. A disordered region spans residues 1-25 (MEEKTHHHHHSTNKHIPSSKSRTPL). In terms of domain architecture, PAZ spans 379–484 (EFLTDLPRNK…LPMELCMICE (106 aa)). In terms of domain architecture, Piwi spans 649–950 (LIICVMEKKH…AAYRGRLYIE (302 aa)). Residues 953-973 (SESNGGSMNPSSVSRVGPPKT) are disordered. Residues 954–966 (ESNGGSMNPSSVS) are compositionally biased toward polar residues.

It belongs to the argonaute family. Ago subfamily. Expressed in leaves and floral buds, and at low levels in roots.

Its function is as follows. Involved in RNA-mediated post-transcriptional gene silencing (PTGS). Main component of the RNA-induced silencing complex (RISC) that binds to a short guide RNA such as a microRNA (miRNA) or small interfering RNA (siRNA). RISC uses the mature miRNA or siRNA as a guide for slicer-directed cleavage of homologous mRNAs to repress gene expression. Required for the processing of 21 nucleotide trans-acting siRNAs (ta-siRNAs) derived from TAS3a transcripts. Associates preferentially with the microRNA (miRNA) miR390 which guides the cleavage of TAS3 precursor RNA. Seems to act as miR390 specific slicer. Associates mainly with small RNAs of 21 nucleotide in length and with a 5' terminal adenosine. Acts in the RDR6/SGS3/DCL4/AGO7 trans-acting siRNA pathway involved in leaf developmental timing. Does not seem to act on leaf polarity. Required for the production of the 30-40nt bacterial-induced long siRNAs (lsiRNA). Involved in antiviral RNA silencing by contributing to efficient viral RNAs clearance. Targets less structured viral RNAs than AGO1 which is capable of targeting RNAs with more compact structures. The polypeptide is Protein argonaute 7 (AGO7) (Arabidopsis thaliana (Mouse-ear cress)).